We begin with the raw amino-acid sequence, 1608 residues long: Adenylate cyclase type 10 (1608 aa).

2 Guanylate cyclase domains span residues 42–179 (VLMF…RLAQ) and 293–418 (TIVF…ARMM). Residues Asp-47 and Ile-48 each coordinate Mg(2+). Residue 47–52 (DISGFT) participates in ATP binding. Lys-95 contributes to the hydrogencarbonate binding site. A Mg(2+)-binding site is contributed by Asp-99. Residues Asp-99 and Lys-144 each contribute to the ATP site. Hydrogencarbonate-binding residues include Val-167, Arg-176, and Met-337. ATP-binding positions include Val-406 and 412–416 (NIAAR).

The protein belongs to the adenylyl cyclase class-4/guanylyl cyclase family. The cofactor is Mg(2+). Requires Mn(2+) as cofactor. Cleavage may occur to generate the active 48 kDa form. In terms of tissue distribution, detected in testis (at protein level). Preferentially expressed in testis.

Its subcellular location is the cell membrane. It is found in the cytoplasm. The protein localises to the cytoskeleton. It localises to the perinuclear region. The protein resides in the nucleus. Its subcellular location is the cell projection. It is found in the cilium. The protein localises to the mitochondrion. It carries out the reaction ATP = 3',5'-cyclic AMP + diphosphate. With respect to regulation, activated by manganese or magnesium ions. In the presence of magnesium ions, the enzyme is activated by bicarbonate. Calcium mildly increases the enzyme activity, also in the presence of magnesium ions. Functionally, catalyzes the formation of the signaling molecule cAMP. May function as sensor that mediates responses to changes in cellular bicarbonate and CO(2) levels. Has a critical role in mammalian spermatogenesis by producing the cAMP which regulates cAMP-responsive nuclear factors indispensable for sperm maturation in the epididymis. Induces capacitation, the maturational process that sperm undergo prior to fertilization. Involved in ciliary beat regulation. This Rattus norvegicus (Rat) protein is Adenylate cyclase type 10 (Adcy10).